Consider the following 567-residue polypeptide: Frizzled-7 (567 aa).

The signal sequence occupies residues 1 to 31 (MRPAAGEAGAGLRWLGLAALLAALLGTPCAA). The Extracellular portion of the chain corresponds to 32-250 (AHHEDKAISV…EAEVRFARLW (219 aa)). The FZ domain maps to 42 to 161 (PDHGFCQPIS…HGAGEICVGQ (120 aa)). Cystine bridges form between C47-C108, C55-C101, C92-C129, C118-C158, and C122-C146. The N-linked (GlcNAc...) asparagine glycan is linked to N61. The N-linked (GlcNAc...) asparagine glycan is linked to N162. The chain crosses the membrane as a helical span at residues 251-271 (VGVWSVLCCASTLFTVLTYLV). Residues 272–282 (DMRRFSYPERP) lie on the Cytoplasmic side of the membrane. The chain crosses the membrane as a helical span at residues 283–303 (IIFLSGCYFMVAVAYAAGFLL). The Extracellular segment spans residues 304–330 (EERVVCLERFSEDGYRTVAQGTKKEGC). A helical membrane pass occupies residues 331–351 (TILFMILYFFGMASSIWWVIL). The Cytoplasmic portion of the chain corresponds to 352 to 373 (SLTWFLAAGMKWGHEAIEANSQ). Residues 374 to 394 (YFHLAAWAVPAVKTITILAMG) form a helical membrane-spanning segment. Over 395-417 (QVDGDVLSGVCYVGIYSVDSLRG) the chain is Extracellular. A helical transmembrane segment spans residues 418–438 (FVLAPLFVYLFIGTSFLLAGF). Residues 439–464 (VSLFRIRTIMKHDGTKTEKLEKLMVR) lie on the Cytoplasmic side of the membrane. Residues 465 to 485 (IGVFSVLYTVPATIVVACYFY) traverse the membrane as a helical segment. At 486 to 521 (EQAFRSTWEKTWLLQTCKTYAVPCPSHFAPMSPDFT) the chain is on the extracellular side. A helical membrane pass occupies residues 522 to 542 (VFMIKYLMTMIVGITTGFWIW). At 543 to 567 (SGKTLQSWRRFYHRLSTGSKGETAV) the chain is on the cytoplasmic side. A Lys-Thr-X-X-X-Trp motif, mediates interaction with the PDZ domain of Dvl family members motif is present at residues 545 to 550 (KTLQSW). The short motif at 565 to 567 (TAV) is the PDZ-binding element.

The protein belongs to the G-protein coupled receptor Fz/Smo family. In terms of tissue distribution, expressed broadly in cranial ectoderm. Also expressed in the developing somites and in other cranial placodes, including the olfactory, lens, otic placodes (lateral half of the vesicle) and epibranchial placodes. Low level of expression in all the mesoderm derivatives in the limb buds.

It localises to the cell membrane. The protein resides in the endosome membrane. In terms of biological role, receptor for Wnt proteins. Most of frizzled receptors are coupled to the beta-catenin canonical signaling pathway, which leads to the activation of disheveled proteins, inhibition of GSK-3 kinase, nuclear accumulation of beta-catenin and activation of Wnt target genes. A second signaling pathway involving PKC and calcium fluxes has been seen for some family members, but it is not yet clear if it represents a distinct pathway or if it can be integrated in the canonical pathway, as PKC seems to be required for Wnt-mediated inactivation of GSK-3 kinase. Both pathways seem to involve interactions with G-proteins. May be involved in transduction and intercellular transmission of polarity information during tissue morphogenesis and/or in differentiated tissues. This is Frizzled-7 (FZD7) from Gallus gallus (Chicken).